The sequence spans 664 residues: MKKIFDDIYVGSNIISKLNDYTEDFDKILIFSNETIADLYFEKFKSTLNEKDKVFYFAIKDGEEYKNIESILPVYDFMLENNFSRKSLIISLGGGVICDMGGYISATYMRGIEFIQVPTSLLAQVDASVGGKVAINHPKCKNMIGSFKNPYRVIIDVEFLKTLPKREFKSGMGELLKHSFLTKDKSYLEYIENNVEKIKNLDNEVLENIVEQSIRIKKHYVDIDPFEKGERAFLNLGHTYAHALESFFDYKAYTHGEAVSKGIIFDLELSLLRGQIDKEYLERARNIFKLFDIDTDLIYLPSDKFIPLMRKDKKNSFNKIITILLDSEGHLSKTEVKEDEIVKIIDKYKNNFLRASIDIGTNSCRLLIAEVEKDNENITFKKEIYKDLEIVKLGEDVNKNKFLKEEAIERTLKCLKKYRKIIDKYSIEEKNIICFATSATRDSTNKDYFIKKVFDETKIKINCISGDKEAYINFKGVISSFDRDFKDNILVFDIGGGSTEFTLGNMQGIEKKISLNIGSVRITEKFFLNNKLYNYSEENRIKAKDWVKENLKELEDFKKLNFSLIGVAGTTTTQVSVREKMEVYDSEKIHLSNLTSKEINDNLSLFIKNINKQEIKGLDPKRKDVIIGGTIILKEILDYFGKDFIIVSENDNLMGAILEGVENK.

A 3-dehydroquinate synthase region spans residues 1 to 352; that stretch reads MKKIFDDIYV…KIIDKYKNNF (352 aa). NAD(+) contacts are provided by residues 61–66, 95–99, 119–120, K132, K141, and 159–162; these read DGEEYK, GVICD, TS, and FLKT. Zn(2+) contacts are provided by E174, H238, and H255. Residues 353–664 form a GPPA/PPX region; the sequence is LRASIDIGTN…GAILEGVENK (312 aa).

The protein in the N-terminal section; belongs to the sugar phosphate cyclases superfamily. Dehydroquinate synthase family. In the C-terminal section; belongs to the GppA/Ppx family. As to quaternary structure, monomer. Requires NAD(+) as cofactor. Co(2+) is required as a cofactor. It depends on Zn(2+) as a cofactor.

It localises to the cytoplasm. The catalysed reaction is 7-phospho-2-dehydro-3-deoxy-D-arabino-heptonate = 3-dehydroquinate + phosphate. Its pathway is metabolic intermediate biosynthesis; chorismate biosynthesis; chorismate from D-erythrose 4-phosphate and phosphoenolpyruvate: step 2/7. This is Bifunctional 3-dehydroquinate synthase/phosphatase (aroB) from Fusobacterium nucleatum subsp. nucleatum (strain ATCC 25586 / DSM 15643 / BCRC 10681 / CIP 101130 / JCM 8532 / KCTC 2640 / LMG 13131 / VPI 4355).